A 338-amino-acid polypeptide reads, in one-letter code: Cytochrome f (338 aa).

The first 45 residues, 1-45 (MNFKVCSFPSRRQSIAAFVRVLMVILLTLGALVSSDVLLPQPAAA), serve as a signal peptide directing secretion. Heme contacts are provided by Tyr46, Cys66, Cys69, and His70. The chain crosses the membrane as a helical span at residues 300–316 (IAFLAAITLTQILLVLK).

Belongs to the cytochrome f family. The 4 large subunits of the cytochrome b6-f complex are cytochrome b6, subunit IV (17 kDa polypeptide, PetD), cytochrome f and the Rieske protein, while the 4 small subunits are PetG, PetL, PetM and PetN. The complex functions as a dimer. Heme is required as a cofactor.

It localises to the cellular thylakoid membrane. Its function is as follows. Component of the cytochrome b6-f complex, which mediates electron transfer between photosystem II (PSII) and photosystem I (PSI), cyclic electron flow around PSI, and state transitions. The sequence is that of Cytochrome f (petA) from Leptolyngbya laminosa (Phormidium laminosum).